The sequence spans 66 residues: MLILTRRVGETLMIGDDVSVTVLGVKGNQVRIGVNAPRDVSVHREEIYDRIRHEKEGGPEDKGNSE.

It belongs to the CsrA/RsmA family. In terms of assembly, homodimer; the beta-strands of each monomer intercalate to form a hydrophobic core, while the alpha-helices form wings that extend away from the core.

The protein resides in the cytoplasm. Its function is as follows. A key translational regulator that binds mRNA to regulate translation initiation and/or mRNA stability. Mediates global changes in gene expression, shifting from rapid growth to stress survival by linking envelope stress, the stringent response and the catabolite repression systems. Usually binds in the 5'-UTR; binding at or near the Shine-Dalgarno sequence prevents ribosome-binding, repressing translation, binding elsewhere in the 5'-UTR can activate translation and/or stabilize the mRNA. Its function is antagonized by small RNA(s). This chain is Translational regulator CsrA, found in Alkalilimnicola ehrlichii (strain ATCC BAA-1101 / DSM 17681 / MLHE-1).